Consider the following 119-residue polypeptide: C-C motif chemokine 24 (119 aa).

The signal sequence occupies residues 1–26; it reads MAGSATIVAGLLLLVACACCIFPIDS. Disulfide bonds link cysteine 33–cysteine 58 and cysteine 34–cysteine 74. Asparagine 54 and asparagine 115 each carry an N-linked (GlcNAc...) asparagine glycan. The disordered stretch occupies residues 96-119; the sequence is PSKGAKAVRTKFAVQRRRGNSTEV. Basic residues predominate over residues 101-119; sequence KAVRTKFAVQRRRGNSTEV.

The protein belongs to the intercrine beta (chemokine CC) family. As to expression, highest expression in jejunum and spleen. Lower levels found in liver and lung. No expression detected in kidney, thymus, brain or testis.

Its subcellular location is the secreted. In terms of biological role, chemotactic for resting T-lymphocytes, and eosinophils. Has lower chemotactic activity for neutrophils but none for monocytes and activated lymphocytes. Is a strong suppressor of colony formation by a multipotential hematopoietic progenitor cell line. Binds to CCR3. The protein is C-C motif chemokine 24 of Mus musculus (Mouse).